Here is a 668-residue protein sequence, read N- to C-terminus: MDKTAAAQRIKWLSSEIERHNRLYYEQDMPEITDAEYDALFRELKELEASYPDLALPDSPTGRVGGRPVAKFTQVRHTTPMLSLENAFTEKDIVDFDDRMKRFLGLSGAEEIGYVCEPKMDGVAVELVYRDGLLAIGSTRGDGLVGEEVTQNLKTIKDIPLRLQTEEPPGLLTVRGEVYLPLEPFRKFNQEREEAGEPPFANPRNAAAGSLRQLDSKITAKRPLSIFCYAPGEVDGVAFQSQSDFLSTIPTWRIPVNPLTRLVPGVQGVLDYYNEMMEKRDDLPYEIDGVVVKVDRFSLQRDLGEKSRSPRWAIAWKFPPRQATTVVNDIVPQVGRTGVITPVAHLEPVNVSGVMVSRATLHNWEEMERKDIRRGDTVVVERAGDVIPAVVQVLVEKRQGSETLLPVPQACPVCGGEVVRIPGEVAVRCVGLNCPAQALERVKHFAARRAMDIDGLGEKFIEQLLNLKLIRNVADIYRLTEEDFMQFERMGKKLAENLLNSIAASKERELSRLIFALGIRHVGEHTAKLLASAFGSMENLAAASEEELTSIREVGPQVAASIADFFKSEENLEVLRELKEHGVNPRVEEKRVGGRFTGKTFVFTGALEKFTRDEAKKMVELEGGHAAGSVSKKTDYVVAGADAGSKLDKAQQLGVRVLSEDDFLELMQ.

Residues aspartate 34–aspartate 38, serine 83–leucine 84, and glutamate 117 each bind NAD(+). Lysine 119 (N6-AMP-lysine intermediate) is an active-site residue. 4 residues coordinate NAD(+): arginine 140, glutamate 177, lysine 293, and lysine 317. 4 residues coordinate Zn(2+): cysteine 411, cysteine 414, cysteine 429, and cysteine 434. Residues arginine 591–glutamine 668 form the BRCT domain.

It belongs to the NAD-dependent DNA ligase family. LigA subfamily. Requires Mg(2+) as cofactor. Mn(2+) is required as a cofactor.

It catalyses the reaction NAD(+) + (deoxyribonucleotide)n-3'-hydroxyl + 5'-phospho-(deoxyribonucleotide)m = (deoxyribonucleotide)n+m + AMP + beta-nicotinamide D-nucleotide.. DNA ligase that catalyzes the formation of phosphodiester linkages between 5'-phosphoryl and 3'-hydroxyl groups in double-stranded DNA using NAD as a coenzyme and as the energy source for the reaction. It is essential for DNA replication and repair of damaged DNA. This Citrifermentans bemidjiense (strain ATCC BAA-1014 / DSM 16622 / JCM 12645 / Bem) (Geobacter bemidjiensis) protein is DNA ligase.